The primary structure comprises 227 residues: Endo-1,4-beta-xylanase 2 (227 aa).

A signal peptide spans 1–36; the sequence is MVSIKSVLAAATAVSSALAAPFDFVPRDNSTALQAR. Asn29 carries N-linked (GlcNAc...) asparagine glycosylation. The GH11 domain maps to 37-225; the sequence is QVTPNAEGWH…SSGESDIYVQ (189 aa). Glu121 functions as the Nucleophile in the catalytic mechanism. The active-site Proton donor is the Glu212.

It belongs to the glycosyl hydrolase 11 (cellulase G) family.

The protein localises to the secreted. The catalysed reaction is Endohydrolysis of (1-&gt;4)-beta-D-xylosidic linkages in xylans.. Its pathway is glycan degradation; xylan degradation. Functionally, endo-1,4-beta-xylanase involved in the hydrolysis of xylan, a major structural heterogeneous polysaccharide found in plant biomass representing the second most abundant polysaccharide in the biosphere, after cellulose. This Humicola insolens (Soft-rot fungus) protein is Endo-1,4-beta-xylanase 2 (xyn2).